The primary structure comprises 117 residues: Peptidyl-tRNA hydrolase (117 aa).

It belongs to the PTH2 family.

It is found in the cytoplasm. The catalysed reaction is an N-acyl-L-alpha-aminoacyl-tRNA + H2O = an N-acyl-L-amino acid + a tRNA + H(+). In terms of biological role, the natural substrate for this enzyme may be peptidyl-tRNAs which drop off the ribosome during protein synthesis. This chain is Peptidyl-tRNA hydrolase, found in Thermoplasma acidophilum (strain ATCC 25905 / DSM 1728 / JCM 9062 / NBRC 15155 / AMRC-C165).